Here is a 1848-residue protein sequence, read N- to C-terminus: Chitin synthase E (1848 aa).

The segment covering methionine 1–serine 17 has biased composition (low complexity). Positions methionine 1–proline 22 are disordered. The Myosin motor domain occupies methionine 1–glutamate 779. Glycine 102–threonine 109 provides a ligand contact to ATP. The tract at residues serine 593–aspartate 621 is disordered. The segment at leucine 659–aspartate 683 is actin-binding. A run of 2 helical transmembrane segments spans residues tryptophan 889–glycine 909 and leucine 928–valine 948. Positions glutamine 952–serine 1040 constitute a Cytochrome b5 heme-binding domain. Residues asparagine 1038 and asparagine 1063 are each glycosylated (N-linked (GlcNAc...) asparagine). A helical membrane pass occupies residues phenylalanine 1200–leucine 1220. N-linked (GlcNAc...) asparagine glycans are attached at residues asparagine 1423, asparagine 1457, and asparagine 1563. Helical transmembrane passes span leucine 1595–valine 1615, isoleucine 1621–isoleucine 1641, and methionine 1648–leucine 1668. Asparagine 1786 is a glycosylation site (N-linked (GlcNAc...) asparagine). The DEK-C domain maps to leucine 1790–alanine 1845.

This sequence in the N-terminal section; belongs to the TRAFAC class myosin-kinesin ATPase superfamily. Myosin family. The protein in the C-terminal section; belongs to the chitin synthase family. Class V subfamily.

It localises to the cell membrane. Its subcellular location is the cell septum. The protein localises to the cell tip. It carries out the reaction [(1-&gt;4)-N-acetyl-beta-D-glucosaminyl](n) + UDP-N-acetyl-alpha-D-glucosamine = [(1-&gt;4)-N-acetyl-beta-D-glucosaminyl](n+1) + UDP + H(+). Functionally, polymerizes chitin, a structural polymer of the cell wall and septum, by transferring the sugar moiety of UDP-GlcNAc to the non-reducing end of the growing chitin polymer. Important for hyphal growth and conidiophore development but not pathogenicity. In Aspergillus fumigatus (strain ATCC MYA-4609 / CBS 101355 / FGSC A1100 / Af293) (Neosartorya fumigata), this protein is Chitin synthase E.